A 387-amino-acid chain; its full sequence is Alkanesulfonate monooxygenase (387 aa).

Belongs to the SsuD family.

It catalyses the reaction an alkanesulfonate + FMNH2 + O2 = an aldehyde + FMN + sulfite + H2O + 2 H(+). Functionally, catalyzes the desulfonation of aliphatic sulfonates. This Cupriavidus metallidurans (strain ATCC 43123 / DSM 2839 / NBRC 102507 / CH34) (Ralstonia metallidurans) protein is Alkanesulfonate monooxygenase.